A 698-amino-acid polypeptide reads, in one-letter code: Long-chain-fatty-acid--CoA ligase 1 (698 aa).

Met-1 carries the post-translational modification N-acetylmethionine. A 3'-nitrotyrosine modification is found at Tyr-9. At Tyr-84 the chain carries Phosphotyrosine. O-linked (GlcNAc) serine glycosylation occurs at Ser-135. Residues Lys-356 and Lys-386 each carry the N6-acetyllysine modification. Position 620 is a phosphoserine (Ser-620). Lys-632 carries the post-translational modification N6-acetyllysine.

This sequence belongs to the ATP-dependent AMP-binding enzyme family. Requires Mg(2+) as cofactor.

Its subcellular location is the microsome membrane. The protein localises to the mitochondrion outer membrane. It is found in the peroxisome membrane. It localises to the endoplasmic reticulum membrane. It catalyses the reaction a long-chain fatty acid + ATP + CoA = a long-chain fatty acyl-CoA + AMP + diphosphate. It carries out the reaction (5Z,8Z,11Z,14Z)-eicosatetraenoate + ATP + CoA = (5Z,8Z,11Z,14Z)-eicosatetraenoyl-CoA + AMP + diphosphate. The enzyme catalyses 3,7,11,15-tetramethylhexadecanoate + ATP + CoA = phytanoyl-CoA + AMP + diphosphate. The catalysed reaction is hexadecanoate + ATP + CoA = hexadecanoyl-CoA + AMP + diphosphate. It catalyses the reaction (E)-hexadec-2-enoate + ATP + CoA = (2E)-hexadecenoyl-CoA + AMP + diphosphate. It carries out the reaction 2,6,10,14-tetramethylpentadecanoate + ATP + CoA = pristanoyl-CoA + AMP + diphosphate. The enzyme catalyses 14,15-epoxy-(5Z,8Z,11Z)-eicosatrienoate + ATP + CoA = 14,15-epoxy-(5Z,8Z,11Z)-eicosatrienoyl-CoA + AMP + diphosphate. The catalysed reaction is 5-hydroxy-(6E,8Z,11Z,14Z)-eicosatetraenoate + ATP + CoA = 5-hydroxy-(6E,8Z,11Z,14Z)-eicosatetraenoyl-CoA + AMP + diphosphate. It catalyses the reaction 12-hydroxy-(5Z,8Z,10E,14Z)-eicosatetraenoate + ATP + CoA = 12-hydroxy-(5Z,8Z,10E,14Z)-eicosatetraenoyl-CoA + AMP + diphosphate. It carries out the reaction 15-hydroxy-(5Z,8Z,11Z,13E)-eicosatetraenoate + ATP + CoA = 15-hydroxy-(5Z,8Z,11Z,13E)-eicosatetraenoyl-CoA + AMP + diphosphate. The enzyme catalyses (9Z)-octadecenoate + ATP + CoA = (9Z)-octadecenoyl-CoA + AMP + diphosphate. Its activity is regulated as follows. Inhibited at high temperature and by arachidonate. Functionally, catalyzes the conversion of long-chain fatty acids to their active form acyl-CoAs for both synthesis of cellular lipids, and degradation via beta-oxidation. Preferentially uses palmitoleate, oleate and linoleate. Preferentially activates arachidonate than epoxyeicosatrienoic acids (EETs) or hydroxyeicosatrienoic acids (HETEs). The sequence is that of Long-chain-fatty-acid--CoA ligase 1 from Cavia porcellus (Guinea pig).